A 102-amino-acid polypeptide reads, in one-letter code: Small ribosomal subunit protein uS14m (102 aa).

Belongs to the universal ribosomal protein uS14 family.

It is found in the mitochondrion. This chain is Small ribosomal subunit protein uS14m (RPS14), found in Paramecium tetraurelia.